The chain runs to 392 residues: [Phe13]-bombesin receptor (392 aa).

Over 1–40 (MPEGFQSLNQTLPSAISSIAHLESLNDSFILGAKQSEDVS) the chain is Extracellular. Asparagine 9 and asparagine 26 each carry an N-linked (GlcNAc...) asparagine glycan. Residues 41–62 (PGLEILALISVTYAVIISVGIL) traverse the membrane as a helical segment. Over 63 to 81 (GNTILIKVFFKIKSMQTVP) the chain is Cytoplasmic. The helical transmembrane segment at 82–102 (NIFITSLAFGDLLLLLTCVPV) threads the bilayer. Residues 103–120 (DASRYIVDTWMFGRAGCK) lie on the Extracellular side of the membrane. Cysteine 119 and cysteine 202 are oxidised to a cystine. A helical transmembrane segment spans residues 121 to 142 (IISFIQLTSVGVSVFTLTVLSA). At 143-162 (DRYRAIVKPLQLQTSDAVLK) the chain is on the cytoplasmic side. The helical transmembrane segment at 163-183 (TCGKAVCVWIISMLLAAPEAV) threads the bilayer. Over 184 to 219 (FSDLYEFGSSEKNTTFEACAPYPVSEKILQETHSLI) the chain is Extracellular. Residues 220–240 (CFLVFYIVPLSIISAYYFLIA) traverse the membrane as a helical segment. The Cytoplasmic segment spans residues 241 to 271 (KTLYKSTFNMPAEEHTHARKQIESRKRVAKT). The helical transmembrane segment at 272–292 (VLVLVALFAVCWLPNHMLYLY) threads the bilayer. Residues 293–312 (RSFTYHSAVNSSAFHLSATI) lie on the Extracellular side of the membrane. A helical membrane pass occupies residues 313–332 (FARVLAFSNSCVNPFALYWL). Topologically, residues 333 to 392 (SRSFRQHFKKQVYCCKTEPPASQQSPTHSSTITGITAVKGNIQMSEISITLLSAYDVKKE) are cytoplasmic. Cysteine 346 is lipidated: S-palmitoyl cysteine.

It belongs to the G-protein coupled receptor 1 family. In terms of tissue distribution, expressed only in brain, primarily in cortex and forebrain and at low levels in the midbrain.

The protein resides in the cell membrane. Its function is as follows. The relative rank potency of bombesin-like peptides for this receptor is [Phe13]bombesin &gt; [Leu13]bombesin &gt; GRP &gt; neuromedin-B. The protein is [Phe13]-bombesin receptor (BB4) of Bombina orientalis (Oriental fire-bellied toad).